We begin with the raw amino-acid sequence, 106 residues long: MVNVPKTRKTYCKGKECRKHTQHKVTQYKAGKASLFAQGKRRYDRKQSGYGGQTKPVFHKKAKTTKKVVLRLECVVCKTKAQLSLKRCKHFELGGDRKQKGQALQF.

The protein belongs to the eukaryotic ribosomal protein eL42 family.

This Wickerhamomyces ciferrii (strain ATCC 14091 / BCRC 22168 / CBS 111 / JCM 3599 / NBRC 0793 / NRRL Y-1031 F-60-10) (Yeast) protein is Large ribosomal subunit protein eL42 (RPL44).